We begin with the raw amino-acid sequence, 383 residues long: Na(+)/H(+) antiporter NhaA (383 aa).

11 helical membrane passes run Ala-14 to Leu-34, Phe-47 to Ile-67, Ile-87 to Phe-107, Gly-117 to Gly-137, Val-146 to Phe-166, Leu-171 to Ala-191, Ala-205 to Ile-225, Val-252 to Val-272, Met-280 to Phe-300, Ile-321 to Leu-341, and Leu-356 to Ser-376.

Belongs to the NhaA Na(+)/H(+) (TC 2.A.33) antiporter family.

Its subcellular location is the cell inner membrane. The enzyme catalyses Na(+)(in) + 2 H(+)(out) = Na(+)(out) + 2 H(+)(in). Na(+)/H(+) antiporter that extrudes sodium in exchange for external protons. This is Na(+)/H(+) antiporter NhaA from Vibrio alginolyticus.